Here is a 767-residue protein sequence, read N- to C-terminus: MTISPPERGSDAKSQVEKVDNPATFELFGKPGHFDRALAKGPKTTTWVWNLHANAHDFDAHTSDLQEVSRRIFSAHFGHLAVIFIWLSGAFFHGARFSNYSGWLADPTHVKPSAQQVWAVFGQEVLNGDMGAGFQGIQITSGLFQMWRAWGITSETQLMALAIGALVMAGLMLNAGVFHYHKAAPKLEWFQNVESMLNHHLAGLLGLGSLSWAGHVIHVSAPVTKLMDAIDAGQPLVLNGKTIASAADIPLPHEFFNQDLLAQLYPGFSAGVGAFFSGNWAAYSDFLTFKGGLNPVTGSLWMTDIAHHHVAIAVMFIVAGHMYRTNWGIGHSIKEIHEGQKGDPLLFPATNGHDGLYDFMTNSWHAQLAVNLAIGGSVSIIVAQHMYAMPPYPYQAIDYPTQIGLFTHHIWIGGFLIVGAGAHAAIAMVRDYDPAKHIDNVLDRVLKARDAIISHLNWVCIWLGAHSFGLYIHNDTMRALGRPQDMFSDSAISIQPIFAQWIQNVHAAAAGSTAPNALAGVSEVFNGSVVAVGGKVAAAPMPLGTADFMVHHIHAFTIHVTVLILLKGVLYARSSRLIPDKANLGFRFSCDGPGRGGTCQVSAWDHVFLGLFWMYNSLSIVIFHFSWKMQSDIWGTVNADGSVAHITNGNFAQSAITINGWLRDYLWAQAVQVINSYGSNTAAYGIMFLGAHFVFAFSLMFLFSGRGYWQELIESIVWAHNKLKVAPAIQPRALSIIQGRAVGVAHYLLGGIATTWAFFHAHILVVG.

A run of 8 helical transmembrane segments spans residues 72-95, 158-181, 197-221, 305-323, 364-387, 403-429, 451-473, and 548-566; these read IFSA…FHGA, LMAL…FHYH, LNHH…HVSA, IAHH…GHMY, WHAQ…QHMY, IGLF…IAMV, AIIS…LYIH, and FMVH…LILL. [4Fe-4S] cluster-binding residues include cysteine 590 and cysteine 599. A run of 2 helical transmembrane segments spans residues 606–627 and 681–703; these read HVFL…HFSW and TAAY…MFLF. Position 692 (histidine 692) interacts with chlorophyll a'. The chlorophyll a site is built by methionine 700 and tyrosine 708. Tryptophan 709 serves as a coordination point for phylloquinone. The chain crosses the membrane as a helical span at residues 741 to 761; that stretch reads AVGVAHYLLGGIATTWAFFHA.

Belongs to the PsaA/PsaB family. In terms of assembly, the PsaA/B heterodimer binds the P700 chlorophyll special pair and subsequent electron acceptors. PSI consists of a core antenna complex that captures photons, and an electron transfer chain that converts photonic excitation into a charge separation. The cyanobacterial PSI reaction center is composed of one copy each of PsaA,B,C,D,E,F,I,J,K,L,M and X, and forms trimeric complexes. It depends on PSI electron transfer chain: 5 chlorophyll a, 1 chlorophyll a', 2 phylloquinones and 3 4Fe-4S clusters. PSI core antenna: 90 chlorophyll a, 22 carotenoids, 3 phospholipids and 1 galactolipid. P700 is a chlorophyll a/chlorophyll a' dimer, A0 is one or more chlorophyll a, A1 is one or both phylloquinones and FX is a shared 4Fe-4S iron-sulfur center. as a cofactor.

The protein localises to the cellular thylakoid membrane. It catalyses the reaction reduced [plastocyanin] + hnu + oxidized [2Fe-2S]-[ferredoxin] = oxidized [plastocyanin] + reduced [2Fe-2S]-[ferredoxin]. In terms of biological role, psaA and PsaB bind P700, the primary electron donor of photosystem I (PSI), as well as the electron acceptors A0, A1 and FX. PSI is a plastocyanin/cytochrome c6-ferredoxin oxidoreductase, converting photonic excitation into a charge separation, which transfers an electron from the donor P700 chlorophyll pair to the spectroscopically characterized acceptors A0, A1, FX, FA and FB in turn. Oxidized P700 is reduced on the lumenal side of the thylakoid membrane by plastocyanin or cytochrome c6. This chain is Photosystem I P700 chlorophyll a apoprotein A1, found in Synechococcus sp. (strain CC9605).